Consider the following 449-residue polypeptide: Kynurenine 3-monooxygenase (449 aa).

This sequence belongs to the aromatic-ring hydroxylase family. KMO subfamily. It depends on FAD as a cofactor.

It catalyses the reaction L-kynurenine + NADPH + O2 + H(+) = 3-hydroxy-L-kynurenine + NADP(+) + H2O. It functions in the pathway cofactor biosynthesis; NAD(+) biosynthesis; quinolinate from L-kynurenine: step 1/3. Its function is as follows. Catalyzes the hydroxylation of L-kynurenine (L-Kyn) to form 3-hydroxy-L-kynurenine (L-3OHKyn). Required for synthesis of quinolinic acid. This Legionella pneumophila (strain Lens) protein is Kynurenine 3-monooxygenase.